A 182-amino-acid chain; its full sequence is CD-NTase-associated protein 15 (182 aa).

Helical transmembrane passes span 11–31 and 33–53; these read ITGW…CTVW and IGWI…TIGY.

This sequence belongs to the CBASS Cap15 membrane effector family. In terms of assembly, the beta barrel domain oligomerizes; in the presence of cyclic nucleotides (probably 3',2'-cGAMP) higher-level oligomers occur.

The protein resides in the cell membrane. Effector protein of a CBASS antivirus system. CBASS (cyclic oligonucleotide-based antiphage signaling system) provides immunity against bacteriophage. The CD-NTase protein (CdnE) synthesizes cyclic nucleotides in response to infection; these serve as specific second messenger signals. The signals activate a diverse range of effectors, leading to bacterial cell death and thus abortive phage infection. This system triggers membrane disruption without lysis. A type I-B CBASS system. Binds cyclic nucleotide second messenger 3',2'-cGAMP, probably oligomerizing, and induces cell membrane shrinkage and rupture, leading to cell death. Its function is as follows. Protects S.aureus against phage infection. When the CBASS operon (cdnE-cap15) is introduced in S.aureus strain RN4220 there is strong protection against lytic DNA phages 80alpha-vir and phi-NM1-gamma-6 but little to no protection against phages phi-NM4-gamma-4 or phi-12-gamma-3. This Staphylococcus schleiferi protein is CD-NTase-associated protein 15.